The chain runs to 494 residues: Cytochrome c-552 (494 aa).

Residues 1–31 (MEKKLKSWQGWLLFGGTMVVVFVLGMIAASV) form the signal peptide. His-116 serves as a coordination point for heme c. Residues Cys-144, Cys-147, and Lys-148 each contribute to the heme site. Residues Cys-182, Cys-185, His-186, Cys-224, Cys-227, and His-228 each contribute to the heme c site. Ca(2+)-binding residues include Glu-230, Tyr-231, Lys-276, and Gln-278. Tyr-231 provides a ligand contact to substrate. Residue His-279 participates in substrate binding. His-290, Cys-297, Cys-300, His-301, His-315, Cys-328, Cys-331, His-332, and His-407 together coordinate heme c.

This sequence belongs to the cytochrome c-552 family. Requires Ca(2+) as cofactor. Heme c serves as cofactor.

It is found in the periplasm. The catalysed reaction is 6 Fe(III)-[cytochrome c] + NH4(+) + 2 H2O = 6 Fe(II)-[cytochrome c] + nitrite + 8 H(+). It participates in nitrogen metabolism; nitrate reduction (assimilation). Catalyzes the reduction of nitrite to ammonia, consuming six electrons in the process. This Parabacteroides distasonis (strain ATCC 8503 / DSM 20701 / CIP 104284 / JCM 5825 / NCTC 11152) protein is Cytochrome c-552.